We begin with the raw amino-acid sequence, 406 residues long: S-adenosylmethionine synthase (406 aa).

Residue Gly-140–Asp-145 coordinates ATP.

The protein belongs to the AdoMet synthase 2 family. It depends on Mg(2+) as a cofactor.

The catalysed reaction is L-methionine + ATP + H2O = S-adenosyl-L-methionine + phosphate + diphosphate. It functions in the pathway amino-acid biosynthesis; S-adenosyl-L-methionine biosynthesis; S-adenosyl-L-methionine from L-methionine: step 1/1. In terms of biological role, catalyzes the formation of S-adenosylmethionine from methionine and ATP. This chain is S-adenosylmethionine synthase (mat), found in Aeropyrum pernix (strain ATCC 700893 / DSM 11879 / JCM 9820 / NBRC 100138 / K1).